The primary structure comprises 739 residues: Ankyrin repeat and SAM domain-containing protein 6 (739 aa).

8 ANK repeats span residues Met1–Asp30, Leu57–Val86, Thr91–His120, Leu124–Asp156, Lys158–Val188, Asp192–Arg221, His226–Leu255, and Asn259–Lys290. Residues Gln295–Ala305 show a composition bias toward basic residues. Disordered regions lie at residues Gln295 to Lys320 and Leu449 to Glu645. Residues Pro462–Val478 show a composition bias toward polar residues. 2 stretches are compositionally biased toward low complexity: residues Gly490–Gly506 and Ser582–Leu592. Positions Thr593–Thr603 are enriched in pro residues. Positions Pro604 to Thr641 are enriched in low complexity. The 64-residue stretch at Thr643–Gly706 folds into the SAM domain.

The protein resides in the cell projection. Its subcellular location is the cilium. In terms of biological role, required for renal function. This is Ankyrin repeat and SAM domain-containing protein 6 (anks6) from Danio rerio (Zebrafish).